The primary structure comprises 262 residues: Acyl-[acyl-carrier-protein]--UDP-N-acetylglucosamine O-acyltransferase (262 aa).

Belongs to the transferase hexapeptide repeat family. LpxA subfamily. In terms of assembly, homotrimer.

The protein resides in the cytoplasm. It carries out the reaction a (3R)-hydroxyacyl-[ACP] + UDP-N-acetyl-alpha-D-glucosamine = a UDP-3-O-[(3R)-3-hydroxyacyl]-N-acetyl-alpha-D-glucosamine + holo-[ACP]. It functions in the pathway glycolipid biosynthesis; lipid IV(A) biosynthesis; lipid IV(A) from (3R)-3-hydroxytetradecanoyl-[acyl-carrier-protein] and UDP-N-acetyl-alpha-D-glucosamine: step 1/6. In terms of biological role, involved in the biosynthesis of lipid A, a phosphorylated glycolipid that anchors the lipopolysaccharide to the outer membrane of the cell. In Cronobacter sakazakii (strain ATCC BAA-894) (Enterobacter sakazakii), this protein is Acyl-[acyl-carrier-protein]--UDP-N-acetylglucosamine O-acyltransferase.